The chain runs to 762 residues: Polyribonucleotide nucleotidyltransferase (762 aa).

Mg(2+)-binding residues include D531 and D537. The KH domain occupies 597 to 656 (PRVTTIKVPVDKIGEVIGPKGKVINSITEETRAQISIEDDGTVFVGATDGPSAQAAIDKI). The 70-residue stretch at 668–737 (GERFLGTVVK…KRGKISLVLV (70 aa)) folds into the S1 motif domain.

It belongs to the polyribonucleotide nucleotidyltransferase family. The cofactor is Mg(2+).

It is found in the cytoplasm. It catalyses the reaction RNA(n+1) + phosphate = RNA(n) + a ribonucleoside 5'-diphosphate. Functionally, involved in mRNA degradation. Catalyzes the phosphorolysis of single-stranded polyribonucleotides processively in the 3'- to 5'-direction. The polypeptide is Polyribonucleotide nucleotidyltransferase (Mycobacterium ulcerans (strain Agy99)).